A 321-amino-acid polypeptide reads, in one-letter code: 5,10-methylenetetrahydromethanopterin reductase (321 aa).

The protein belongs to the mer family. In terms of assembly, homotetramer.

Its subcellular location is the cytoplasm. The catalysed reaction is 5-methyl-5,6,7,8-tetrahydromethanopterin + oxidized coenzyme F420-(gamma-L-Glu)(n) + H(+) = 5,10-methylenetetrahydromethanopterin + reduced coenzyme F420-(gamma-L-Glu)(n). Its pathway is one-carbon metabolism; methanogenesis from CO(2); methyl-coenzyme M from 5,10-methylene-5,6,7,8-tetrahydromethanopterin: step 1/2. Its function is as follows. Catalyzes the reversible reduction of methylene-H(4)MPT to methyl-H(4)MPT. In Methanothermobacter marburgensis (strain ATCC BAA-927 / DSM 2133 / JCM 14651 / NBRC 100331 / OCM 82 / Marburg) (Methanobacterium thermoautotrophicum), this protein is 5,10-methylenetetrahydromethanopterin reductase.